Here is a 251-residue protein sequence, read N- to C-terminus: UPF0246 protein PEPE_1842 (251 aa).

Belongs to the UPF0246 family.

The sequence is that of UPF0246 protein PEPE_1842 from Pediococcus pentosaceus (strain ATCC 25745 / CCUG 21536 / LMG 10740 / 183-1w).